A 530-amino-acid polypeptide reads, in one-letter code: TNF receptor-associated factor 6 (530 aa).

Positions 1 to 362 (MSLLNCENSC…EAQQCNGIYI (362 aa)) are interaction with TAX1BP1. Residues 70-109 (CPICLMALREAVQTPCGHRFCKACITKSIRDAGHKCPVDN) form an RING-type; degenerate zinc finger. Residue lysine 124 forms a Glycyl lysine isopeptide (Lys-Gly) (interchain with G-Cter in SUMO); alternate linkage. A Glycyl lysine isopeptide (Lys-Gly) (interchain with G-Cter in ubiquitin); alternate cross-link involves residue lysine 124. Lysine 142 participates in a covalent cross-link: Glycyl lysine isopeptide (Lys-Gly) (interchain with G-Cter in SUMO). TRAF-type zinc fingers lie at residues 150 to 202 (DHQV…EEKE) and 203 to 259 (IHDQ…NHLA). Positions 302 to 356 (NYEETVKQLEGRLVRQDHQIRELTAKMETQSMHVSELKRTIRSLEDKVAEMEAQQ) form a coiled coil. Lysine 327 is covalently cross-linked (Glycyl lysine isopeptide (Lys-Gly) (interchain with G-Cter in ubiquitin)). An MATH domain is found at 358 to 507 (NGIYIWKIGN…DDTLLVRCEV (150 aa)). The interaction with TANK stretch occupies residues 363 to 530 (WKIGNFGMHL…FQPRSTDAGV (168 aa)). Lysine 461 participates in a covalent cross-link: Glycyl lysine isopeptide (Lys-Gly) (interchain with G-Cter in SUMO).

Belongs to the TNF receptor-associated factor family. A subfamily. Homotrimer. Homooligomer. N-terminal region is dimeric while C-terminal region is trimeric; maybe providing a mode of oligomerization. Upon IL1B treatment, forms a complex with PELI1, IRAK1, IRAK4 and MYD88; this complex recruits MAP3K7/TAK1, TAB1 and TAB2 to mediate NF-kappa-B activation. Direct binding of SMAD6 to PELI1 prevents the complex formation and hence negatively regulates IL1R-TLR signaling and eventually NF-kappa-B-mediated gene expression. Binds to TNFRSF5/CD40 and TNFRSF11A/RANK. Associates with NGFR, TNFRSF17, IRAK2, IRAK3, RIPK2, MAP3K1, MAP3K5, MAP3K14, CSK, TRAF, TRAF-interacting protein TRIP and TNF receptor associated protein TDP2. Interacts with IL17R. Interacts with SQSTM1 bridging NTRK1 and NGFR. Forms a ternary complex with SQSTM1 and PRKCZ. Interacts with PELI2 and PELI3. Binds UBE2V1. Interacts with TAX1BP1; this interaction mediates deubiquitination of TRAF6 and inhibition of NF-kappa-B activation. Interacts with ZNF675. Interacts with ARRB1 and ARRB2. Interacts with MAP3K7 and TAB1/MAP3K7IP1; during IL-1 signaling. Interacts with UBE2N. Interacts with TGFBR1, HDAC1 and RANGAP1. Interacts with AKT1, AKT2 and AKT3. Interacts (via TRAF domains) with NUMBL (via C-terminal). Interacts with RBCK1. Interacts with LIMD1 (via LIM domains). Interacts with RSAD2/viperin. Interacts (via C-terminus) with EIF2AK2/PKR (via the kinase catalytic domain). Interacts with ZFAND5. Interacts with IL1RL1. Interacts with TRAFD1. Interacts with AJUBA. Interacts with MAVS/IPS1. Interacts (via TRAF domains) with DYNC2I2 (via WD domains). Interacts with IFIT3 (via N-terminus). Interacts with TICAM2. Interacts with CARD14. Interacts with CD40 and MAP3K8; the interaction is required for ERK activation. Interacts with TICAM1 and this interaction is enhanced in the presence of WDFY1. Interacts with TANK; this interaction increases in response to DNA damage. Interacts with USP10; this interaction increases in response to DNA damage. Interacts with ZC3H12A; this interaction increases in response to DNA damage and is stimulated by TANK. Interacts with WDFY3. Interacts with TRIM13. Interacts with GPS2. Interacts (via C-terminus) with SASH1. Interacts with LRRC19. Interacts with IL17RA and TRAF3IP2. Interacts with TOMM70. Interacts with AMBRA1; interaction is required to mediate 'Lys-63'-linked ubiquitination of ULK1. Interacts with CRBN; this interaction inhibits TLR4-mediated signaling by preventing TRAF6-mediated ubiquitination of ECSIT. Post-translationally, sumoylated on Lys-124, Lys-142 and Lys-461 with SUMO1. Polyubiquitinated on Lys-124 by TRAF3IP2; after cell stimulation with IL17A. Polyubiquitinated; after cell stimulation with IL1B or TGFB. This ligand-induced cell stimulation leads to dimerization/oligomerization of TRAF6 molecules, followed by auto-ubiquitination which involves UBE2N and UBE2V1 and leads to TRAF6 activation. This 'Lys-63' site-specific poly-ubiquitination appears to be associated with the activation of signaling molecules. Endogenous autoubiquitination occurs only for the cytoplasmic form. Deubiquitinated by USP10 in a TANK-dependent manner, leading to the negative regulation of NF-kappa-B signaling upon DNA damage. LRRC19 induces 'Lys-63' ubiquitination. Ubiquitinated at Lys-327 by the SCF(FBXL2) complex, leading to its degradation by the proteasome.

It localises to the cytoplasm. It is found in the cell cortex. The protein localises to the nucleus. The protein resides in the lipid droplet. It carries out the reaction S-ubiquitinyl-[E2 ubiquitin-conjugating enzyme]-L-cysteine + [acceptor protein]-L-lysine = [E2 ubiquitin-conjugating enzyme]-L-cysteine + N(6)-ubiquitinyl-[acceptor protein]-L-lysine.. It participates in protein modification; protein ubiquitination. In terms of biological role, E3 ubiquitin ligase that, together with UBE2N and UBE2V1, mediates the synthesis of 'Lys-63'-linked-polyubiquitin chains conjugated to proteins, such as ECSIT, IKBKG, IRAK1, AKT1 and AKT2. Also mediates ubiquitination of free/unanchored polyubiquitin chain that leads to MAP3K7 activation. Leads to the activation of NF-kappa-B and JUN. Seems to also play a role in dendritic cells (DCs) maturation and/or activation. Represses c-Myb-mediated transactivation, in B-lymphocytes. Adapter protein that seems to play a role in signal transduction initiated via TNF receptor, IL-1 receptor and IL-17 receptor. Regulates osteoclast differentiation by mediating the activation of adapter protein complex 1 (AP-1) and NF-kappa-B, in response to RANK-L stimulation. Together with MAP3K8, mediates CD40 signals that activate ERK in B-cells and macrophages, and thus may play a role in the regulation of immunoglobulin production. Acts as a regulator of the JNK and NF-kappa-B signaling pathways by initiating assembly of heterotypic 'Lys-63'-/'Lys-48'-linked branched ubiquitin chains that are then recognized by TAB2: TRAF6 catalyzes initial 'Lys-63'-linked-polyubiquitin chains that are then branched via 'Lys-48'-linked polyubiquitin by HUWE1. 'Lys-63'-/'Lys-48'-linked branched ubiquitin chains protect 'Lys-63'-linkages from CYLD deubiquitination. Also participates in the TCR signaling by ubiquitinating LAT. The protein is TNF receptor-associated factor 6 (Traf6) of Rattus norvegicus (Rat).